A 463-amino-acid chain; its full sequence is Perilipin-5 (463 aa).

An interaction with LIPE region spans residues 1-108 (MSEEEAAQIP…KLEEKLPFLQ (108 aa)). Residues 1-173 (MSEEEAAQIP…HFLPMTEEEL (173 aa)) are essential for lipid droplet targeting. Serine 2, serine 148, and serine 322 each carry phosphoserine. Positions 185-463 (VGSVEDQRRQ…KHTLMPELDF (279 aa)) are interaction with PNPLA2 and ABHD5. The tract at residues 444-463 (QEPETPSCPVKHTLMPELDF) is recruits mitochondria at the lipid droplet surface.

Belongs to the perilipin family. As to quaternary structure, homooligomer. Interacts with PNPLA2; prevents interaction of PNPLA2 with ABHD5. Interacts with ABHD5; targets ABHD5 to lipid droplets and promotes interaction of ABHD5 with PNPLA2. Interacts with LIPE. Post-translationally, phosphorylated by PKA. Phosphorylated on serine in skeletal muscle at rest or upon lipolytic stimulation. As to expression, expressed in skeletal muscle, liver, heart and kidney.

It is found in the lipid droplet. It localises to the cytoplasm. The protein resides in the mitochondrion. In terms of biological role, lipid droplet-associated protein that maintains the balance between lipogenesis and lipolysis and also regulates fatty acid oxidation in oxidative tissues. Recruits mitochondria to the surface of lipid droplets and is involved in lipid droplet homeostasis by regulating both the storage of fatty acids in the form of triglycerides and the release of fatty acids for mitochondrial fatty acid oxidation. In lipid droplet triacylglycerol hydrolysis, plays a role as a scaffolding protein for three major key lipolytic players: ABHD5, PNPLA2 and LIPE. Reduces the triacylglycerol hydrolase activity of PNPLA2 by recruiting and sequestering PNPLA2 to lipid droplets. Phosphorylation by PKA enables lipolysis probably by promoting release of ABHD5 from the perilipin scaffold and by facilitating interaction of ABHD5 with PNPLA2. Also increases lipolysis through interaction with LIPE and upon PKA-mediated phosphorylation of LIPE. This Homo sapiens (Human) protein is Perilipin-5 (PLIN5).